We begin with the raw amino-acid sequence, 130 residues long: Small ribosomal subunit protein uS8 (130 aa).

This sequence belongs to the universal ribosomal protein uS8 family.

It is found in the cytoplasm. The sequence is that of Small ribosomal subunit protein uS8 (RPS15A) from Daucus carota (Wild carrot).